The chain runs to 191 residues: Signal peptidase IB (191 aa).

Residues M1 to E7 are Cytoplasmic-facing. A helical transmembrane segment spans residues W8–T28. Residues P29–N191 lie on the Extracellular side of the membrane. Residues S36 and K77 contribute to the active site.

It belongs to the peptidase S26 family.

It localises to the cell membrane. It catalyses the reaction Cleavage of hydrophobic, N-terminal signal or leader sequences from secreted and periplasmic proteins.. Functionally, essential for cell viability. The polypeptide is Signal peptidase IB (spsB) (Staphylococcus aureus (strain MRSA252)).